We begin with the raw amino-acid sequence, 536 residues long: Probable E3 ubiquitin-protein ligase ARI13 (536 aa).

The segment at 83-328 (KISSCGICFK…GFYKFCNVSM (246 aa)) is TRIAD supradomain. 24 residues coordinate Zn(2+): C87, C90, C106, H108, C111, C114, C135, C140, C180, C185, C210, C212, C217, C220, H225, C230, C277, C280, C297, C299, C304, C307, H314, and C324. Residues 87 to 140 (CGICFKTCDDGDYLISTPFCSHMFCKSCWRKYLEKNFYLVEKTQTRISCPHGAC) form an RING-type 1 zinc finger. The IBR-type zinc finger occupies 158-230 (EMYVEYILRS…MLESHKPVTC (73 aa)). The segment at 277–307 (CPHCLRPADLGTKQYLRFLTCACNGRFCWKC) adopts an RING-type 2; atypical zinc-finger fold. The segment at 495-526 (DYGGLFWLCDRCTYGNTWFHKECLMCSDDIAA) adopts a RanBP2-type zinc-finger fold.

The protein belongs to the RBR family. Ariadne subfamily. Zn(2+) serves as cofactor.

It catalyses the reaction [E2 ubiquitin-conjugating enzyme]-S-ubiquitinyl-L-cysteine + [acceptor protein]-L-lysine = [E2 ubiquitin-conjugating enzyme]-L-cysteine + [acceptor protein]-N(6)-ubiquitinyl-L-lysine.. Its pathway is protein modification; protein ubiquitination. Might act as an E3 ubiquitin-protein ligase, or as part of E3 complex, which accepts ubiquitin from specific E2 ubiquitin-conjugating enzymes and then transfers it to substrates. The chain is Probable E3 ubiquitin-protein ligase ARI13 (ARI13) from Arabidopsis thaliana (Mouse-ear cress).